The sequence spans 110 residues: Protein YcgL (110 aa).

Positions 14–98 (MFCVIYRSSK…PPEDLLKQHL (85 aa)) constitute a YcgL domain.

The sequence is that of Protein YcgL from Salmonella arizonae (strain ATCC BAA-731 / CDC346-86 / RSK2980).